The following is a 351-amino-acid chain: Cysteine-rich receptor-like protein kinase 45 (351 aa).

Residues 37 to 287 (NDFSELVGRG…EILRYIHIAL (251 aa)) enclose the Protein kinase domain. Residues 43–51 (VGRGGFGFV) and Lys-65 contribute to the ATP site. Phosphotyrosine is present on Tyr-110. Asp-162 functions as the Proton acceptor in the catalytic mechanism. 2 positions are modified to phosphothreonine: Thr-197 and Thr-202. Position 210 is a phosphotyrosine (Tyr-210).

The protein belongs to the protein kinase superfamily. Ser/Thr protein kinase family. CRK subfamily. Interacts with CRK36. Post-translationally, autophosphorylated and phosphorylated by CRK36.

The protein resides in the cytoplasm. It is found in the cytosol. The enzyme catalyses L-seryl-[protein] + ATP = O-phospho-L-seryl-[protein] + ADP + H(+). It carries out the reaction L-threonyl-[protein] + ATP = O-phospho-L-threonyl-[protein] + ADP + H(+). Its function is as follows. Forms a complex with CRK36 that may negatively control abscisic acid (ABA) and osmotic stress signal transduction. Involved in plant response to ABA during seed germination, early seedling growth and responses to abiotic stresses by inducing the expression of ABA-responsive genes and stress-inducible genes. Acts as a positive regulator in disease resistance, downstream of NPR1 and WRKY70. The protein is Cysteine-rich receptor-like protein kinase 45 of Arabidopsis thaliana (Mouse-ear cress).